We begin with the raw amino-acid sequence, 312 residues long: Ribosomal RNA small subunit methyltransferase H (312 aa).

S-adenosyl-L-methionine contacts are provided by residues 35-37 (GGH), aspartate 55, phenylalanine 80, aspartate 102, and glutamine 109.

Belongs to the methyltransferase superfamily. RsmH family.

Its subcellular location is the cytoplasm. The enzyme catalyses cytidine(1402) in 16S rRNA + S-adenosyl-L-methionine = N(4)-methylcytidine(1402) in 16S rRNA + S-adenosyl-L-homocysteine + H(+). In terms of biological role, specifically methylates the N4 position of cytidine in position 1402 (C1402) of 16S rRNA. In Pseudoalteromonas translucida (strain TAC 125), this protein is Ribosomal RNA small subunit methyltransferase H.